The primary structure comprises 479 residues: Splicing factor ESS-2 homolog (479 aa).

Methionine 1 carries the N-acetylmethionine modification. 2 disordered regions span residues 1-38 (MGTPGTSAGALFLSSASAPSRKRAAGEAGEAGVARSRQ) and 95-152 (GKIS…PSLD). A Phosphothreonine modification is found at threonine 3. The segment covering 7–19 (SAGALFLSSASAP) has biased composition (low complexity). Residues 135–145 (DDGEAGEEEEK) are compositionally biased toward acidic residues. A Glycyl lysine isopeptide (Lys-Gly) (interchain with G-Cter in SUMO2) cross-link involves residue lysine 145. Serine 295 carries the post-translational modification Phosphoserine. Threonine 389 is modified (phosphothreonine). Residues serine 394 and serine 398 each carry the phosphoserine modification. The disordered stretch occupies residues 415 to 479 (RALRASYTPS…PARRKASDFF (65 aa)). A compositionally biased stretch (low complexity) spans 433–454 (TPAGGPQTPTSTPAPGSATRTP). The span at 455-466 (LTQDPASITDNL) shows a compositional bias: polar residues.

It belongs to the ESS2 family. In terms of assembly, identified in the spliceosome C complex. Interacts with FRA10AC1. In terms of tissue distribution, in the adult, widely expressed with highest expression in the testis and brain. Also widely expressed in the embryo with highest levels in the anterior pons.

The protein localises to the nucleus. Functionally, may be involved in pre-mRNA splicing. The sequence is that of Splicing factor ESS-2 homolog (Ess2) from Mus musculus (Mouse).